The following is a 281-amino-acid chain: Probable thioesterase gloN (281 aa).

Residues 207–233 (LDDGSNNSRDLNETSPTETSNDSETQA) form a disordered region. The span at 210–232 (GSNNSRDLNETSPTETSNDSETQ) shows a compositional bias: polar residues.

It belongs to the AMT4 thioesterase family.

It functions in the pathway mycotoxin biosynthesis. Functionally, probable thioesterase; part of the gene cluster that mediates the biosynthesis of pneumocandins, lipohexapeptides of the echinocandin family that prevent fungal cell wall formation by non-competitive inhibition of beta-1,3-glucan synthase. The 10,12-dimethylmyristoyl side chain is synthesized by the reducing polyketide synthase gloL/GLPKS4. The thioesterase gloN/GLHYD exclusively interacts with gloL/GLPKS4 to maintain turnover of the polyketide side chain. The 10R,12S-dimethylmyristic acid is then transferred to the first thiolation domain of the nonribosomal peptide synthetase gloA/GLNRPS4 by the acyl-AMP ligase gloD/GLligase, followed by its acylation to L-ornithine to trigger elongation of the cyclic hexapeptide. L-ornithine, 4R-hydroxyl-L-proline (generated from L-proline by the dioxygenase gloF/GLOXY2), 3S-hydroxyl-L-homotyrosine (generated by gloG/GLHtyB, gloH/GLHtyA, gloI/GLHtyC, gloJ/GLHtyD and hydroxylated at C-3 by the dioxygenase gloM/GLOXY1), 3R-hydroxyl-L-glutamine (generated from L-glutamine probably by the dioxygenase gloE/GLOXY3) and 3S-hydroxyl-L-proline (generated from L-proline by the dioxygenase gloF/GLOXY2 to yield pneumocandin B0), or 3S-hydroxyl-4S-methyl-L-proline (generated from L-leucine by the dioxygenase gloC/GLOXY4 to yield pneumocandin A0) are sequentially added to the growing chain. The last C domain of gloA/GLNRPS4 is proposed to be responsible for cyclization by condensation to form the peptide bond between L-ornithine and 3S-hydroxyl-4S-methyl-L-proline (for pneumocandin A0) or 3S-hydroxyl-L-proline (for pneumocandin B0). Finally, the subsequent C-4 hydroxylation of 3S-hydroxyl-L-homotyrosine and L-ornithine dihydroxylation at C-4 and C-5 are performed by the cytochrome P450 monooxygenases gloP/GLP450-1 and gloO/GLP450-2, respectively. The protein is Probable thioesterase gloN of Glarea lozoyensis (strain ATCC 20868 / MF5171).